The chain runs to 398 residues: GTP cyclohydrolase-2 (398 aa).

The segment at 1-172 (MNTPTHTHPH…TAAACASTTE (172 aa)) is unknown. The GTP cyclohydrolase II stretch occupies residues 173–398 (YELVTRTPVP…VKPIAKTGHA (226 aa)). GTP is bound at residue 220-224 (RVHSS). The Zn(2+) site is built by C225, C236, and C238. Residues Q241, 263-265 (EGR), and T285 contribute to the GTP site. D297 serves as the catalytic Proton acceptor. The Nucleophile role is filled by R299. Residues S320 and K325 each contribute to the GTP site. The segment at 375 to 398 (QRPQDPSETVDGETVKPIAKTGHA) is disordered.

The protein in the C-terminal section; belongs to the GTP cyclohydrolase II family. Zn(2+) serves as cofactor.

The enzyme catalyses GTP + 4 H2O = 2,5-diamino-6-hydroxy-4-(5-phosphoribosylamino)-pyrimidine + formate + 2 phosphate + 3 H(+). Its pathway is cofactor biosynthesis; riboflavin biosynthesis; 5-amino-6-(D-ribitylamino)uracil from GTP: step 1/4. Functionally, catalyzes the conversion of GTP to 2,5-diamino-6-ribosylamino-4(3H)-pyrimidinone 5'-phosphate (DARP), formate and pyrophosphate. This Xylella fastidiosa (strain Temecula1 / ATCC 700964) protein is GTP cyclohydrolase-2 (ribA).